The sequence spans 188 residues: Ribosome hibernation promotion factor (188 aa).

The segment at 93-125 is disordered; the sequence is KTRVNRKKRKESEHEPFPATPETPPETAVDHDK.

The protein belongs to the HPF/YfiA ribosome-associated protein family. Long HPF subfamily. Interacts with 100S ribosomes.

The protein resides in the cytoplasm. In terms of biological role, required for dimerization of active 70S ribosomes into 100S ribosomes in stationary phase; 100S ribosomes are translationally inactive and sometimes present during exponential growth. This is Ribosome hibernation promotion factor from Staphylococcus carnosus (strain TM300).